Reading from the N-terminus, the 557-residue chain is Probable transcription factor sol4 (557 aa).

The fungal transcription factor domain stretch occupies residues 26–186 (IQYFFEDINW…EREMRRRMFC (161 aa)). Residues 463–490 (SGTQTRSMPSTETLTYNSSSSTSYGDGH) are disordered. The span at 472–485 (STETLTYNSSSSTS) shows a compositional bias: low complexity.

It is found in the nucleus. Functionally, probable transcription factor that regulates the expression of the gene cluster that mediates the biosynthesis of the phytotoxin solanapyrone, a causal agent of early blight disease of potato and tomato. The polypeptide is Probable transcription factor sol4 (sol4) (Alternaria solani).